Reading from the N-terminus, the 359-residue chain is Protein mab-21-like 2 (359 aa).

This sequence belongs to the mab-21 family.

Its subcellular location is the nucleus. It is found in the cytoplasm. Its function is as follows. Required for several aspects of embryonic development including normal development of the eye. This chain is Protein mab-21-like 2 (MAB21L2), found in Homo sapiens (Human).